The primary structure comprises 62 residues: MANAKTIKVTLTRSPIGCQPKHKLCVKGLGLRKIGHTVEVEDTPSIRGMINRVNYLVRVEEN.

The protein belongs to the universal ribosomal protein uL30 family. As to quaternary structure, part of the 50S ribosomal subunit.

This Marinobacter nauticus (strain ATCC 700491 / DSM 11845 / VT8) (Marinobacter aquaeolei) protein is Large ribosomal subunit protein uL30.